The following is a 299-amino-acid chain: Protease HtpX homolog (299 aa).

Helical transmembrane passes span 14-34 and 39-59; these read IVLL…VGYL and LVGG…SMIF. Residue His-143 participates in Zn(2+) binding. Glu-144 is an active-site residue. His-147 serves as a coordination point for Zn(2+). 2 helical membrane passes run 158–178 and 198–218; these read IAVA…RMMW and IILL…ASLV. Glu-227 contributes to the Zn(2+) binding site.

This sequence belongs to the peptidase M48B family. Zn(2+) serves as cofactor.

Its subcellular location is the cell membrane. In Streptococcus mutans serotype c (strain ATCC 700610 / UA159), this protein is Protease HtpX homolog.